A 496-amino-acid polypeptide reads, in one-letter code: Genome polyprotein (496 aa).

Over 1-447 the chain is Extracellular; it reads SRCTHLENRD…HTVLGGAFNS (447 aa). Intrachain disulfides connect C3-C30, C60-C116, C60-C121, C74-C105, C92-C116, and C92-C121. Positions 98-111 are fusion peptide; the sequence is DRGWGNHCGLFGKG. A glycan (N-linked (GlcNAc...) asparagine; by host) is linked at N154. 2 disulfides stabilise this stretch: C186/C290 and C307/C338. A helical membrane pass occupies residues 448–468; that stretch reads IFGGVGFLPKLLMGVALAWLG. The Cytoplasmic portion of the chain corresponds to 469 to 479; sequence LNTRNPTMSMS. Residues 480–496 traverse the membrane as a helical segment; sequence FLLAGGLVLAMTLGVGA.

As to quaternary structure, homodimer; in the endoplasmic reticulum and Golgi. N-glycosylated.

The protein resides in the virion membrane. The protein localises to the host endoplasmic reticulum membrane. Functionally, binds to host cell surface receptor and mediates fusion between viral and cellular membranes. Envelope protein is synthesized in the endoplasmic reticulum in the form of heterodimer with protein prM. They play a role in virion budding in the ER, and the newly formed immature particle is covered with 60 spikes composed of heterodimer between precursor prM and envelope protein E. The virion is transported to the Golgi apparatus where the low pH causes dissociation of PrM-E heterodimers and formation of E homodimers. prM-E cleavage is ineficient, and many virions are only partially matured. These uncleaved prM would play a role in immune evasion. This is Genome polyprotein from Louping ill virus (strain Negishi 3248/49/P10) (Li).